The following is a 1147-amino-acid chain: MSLQFVIGGSGAGKSYQLYQRVIESSLKEPKGKFLILVPEQFTLQTQKDLVTMHPKKGIHNIDILSFLRLAFRIFEETGGNDRLVLEDTGKSMIVKKVMMEKRNDLILFGANVKKQGFVEEMKSIISELAQYSIHTDELQKMKEVAKGKPLLNHKLTDIMTIYQAYEEFLQDKYINSEEILDLLCDVIDDSSFVNDSEICLDGFTGFTPSQYKLLSHLMKKAKSVTVTITMDESQINRKQEEHQLFYLSGKMAEKLTDLAITQKIEIKPPILVASENGGYSYRFHNSMALSALEKNIFRYPYKSFTEEQDDISITAAKDPMAEARHAVIEITRLLREEEYRYKDIAIVSGAMEVYGDIVKRELELAGIPCFVDHKKNILTNPVVEFLRSALDVVTHNFDYEAIFRFLKCGLTDFTMDEIDLFENYVIAFGIRGKYRYEHEWERKYKTNYEVDLEKINYVRECILKEFTPLYETLTSKKSSVRECVNALYNLLCTYHIEEKIHIFVEKFKAQGEKEDKLRAKEYEQIYRMVLEIFDRMVELLGEDVLPLKEFRDILDTGFREAKVGLIPPSIDQILVGDIERTRLKDIKALFFLGVNDGIVPKANPGGGILSDAERQLFADHEIELSPTKRQTAYLTEFYLYLNLTKPQNKLYLYYSKLDVSGKSIRASYLLGKISKIFPKLKIYDADRKSREDELLGTDQGLSYLISVLRDYEGEQPKLWREVYHLYVSGQIKGRISLDKVLQGVFYQNYEQGLTKEVARKLYGETLLGSVTRMEKYAACAFAHFLQYGLSLEERQEYKISMPDIGSLFHEALERFSKALKELDISWHELPEDVRISLGERCVREAVENFGNGILESSKRSAYLATRVERILQRTTKTLTHQLQQGVFEPGSYEQYFSHADRYLNLRGRIDRVDLYEQDGKLYVKVIDYKSGSTSFDLMNLYYGLQLQLGVYLSAAMELMKEQYPNHEIHPAGVFYYNLDDPIVTKSSSVEEDIEKKLAMNGLVNASKVVVPLLDTSFCGDEGELAPSTKSTVIPVETGKDGTFTKRSSVAKEEELITLTDYIKDLMHRFSEQIMEGKVRHNPYRAKNRNACTYCSFQSVCGFDCKVSGFSYRNLKTLNKEEVWNLIKKEDEFFGKDELDTGATEGN.

Residue 8–15 (GGSGAGKS) coordinates ATP. [4Fe-4S] cluster-binding residues include cysteine 780, cysteine 1092, cysteine 1095, and cysteine 1101.

Belongs to the helicase family. AddB/RexB type 1 subfamily. As to quaternary structure, heterodimer of AddA and AddB. The cofactor is Mg(2+). [4Fe-4S] cluster serves as cofactor.

Its function is as follows. The heterodimer acts as both an ATP-dependent DNA helicase and an ATP-dependent, dual-direction single-stranded exonuclease. Recognizes the chi site generating a DNA molecule suitable for the initiation of homologous recombination. The AddB subunit has 5' -&gt; 3' nuclease activity but not helicase activity. The sequence is that of ATP-dependent helicase/deoxyribonuclease subunit B from Lachnoclostridium phytofermentans (strain ATCC 700394 / DSM 18823 / ISDg) (Clostridium phytofermentans).